The chain runs to 237 residues: tRNA (guanine-N(7)-)-methyltransferase (237 aa).

Residues Glu-68, Glu-93, Asp-120, and Asp-143 each contribute to the S-adenosyl-L-methionine site. The active site involves Asp-143. Residues Lys-147, Asp-179, and 216-219 each bind substrate; that span reads TKFE.

Belongs to the class I-like SAM-binding methyltransferase superfamily. TrmB family.

It carries out the reaction guanosine(46) in tRNA + S-adenosyl-L-methionine = N(7)-methylguanosine(46) in tRNA + S-adenosyl-L-homocysteine. The protein operates within tRNA modification; N(7)-methylguanine-tRNA biosynthesis. Catalyzes the formation of N(7)-methylguanine at position 46 (m7G46) in tRNA. The chain is tRNA (guanine-N(7)-)-methyltransferase from Shewanella pealeana (strain ATCC 700345 / ANG-SQ1).